Reading from the N-terminus, the 1641-residue chain is Vitellogenin-1 (1641 aa).

Residues 1 to 18 (MWYLAFLLIIGAYAADHA) form the signal peptide. One can recognise a Vitellogenin domain in the interval 19 to 790 (WETGNEYHYL…SQDTTVPKSS (772 aa)). A disulfide bridge links C172 with C211. A compositionally biased stretch (polar residues) spans 322 to 334 (LRQPSVSLNSMEA). The segment at 322 to 372 (LRQPSVSLNSMEARSSENSNEENRSDDDRSNFLSNSGEEREYLQSKPTLNE) is disordered. A compositionally biased stretch (basic and acidic residues) spans 342–351 (EENRSDDDRS). 13 N-linked (GlcNAc...) asparagine glycosylation sites follow: N344, N549, N566, N831, N875, N898, N1001, N1053, N1268, N1393, N1396, N1505, and N1523. One can recognise a VWFD domain in the interval 1410-1597 (ESVCVLDKTH…TYAMTQESCQ (188 aa)). A disulfide bridge connects residues C1435 and C1596. The disordered stretch occupies residues 1594–1641 (ESCQGPAPENKRKAEQSTCMSRSYRPSDVISDREAGRSSTKNRGWGYH).

Hemolymph.

The protein resides in the secreted. Precursor of the egg-yolk proteins that are sources of nutrients during embryonic development. The chain is Vitellogenin-1 from Solenopsis invicta (Red imported fire ant).